Here is a 696-residue protein sequence, read N- to C-terminus: Probable glutamine--fructose-6-phosphate aminotransferase [isomerizing] (696 aa).

Residue C2 is the For GATase activity of the active site. The Glutamine amidotransferase type-2 domain maps to 2–303 (CGIFGYINYL…DDDIAHVRDG (302 aa)). 2 consecutive SIS domains span residues 375–514 (YYDI…DSVS) and 547–686 (AIEQ…VDQP).

It carries out the reaction D-fructose 6-phosphate + L-glutamine = D-glucosamine 6-phosphate + L-glutamate. It functions in the pathway nucleotide-sugar biosynthesis; UDP-N-acetyl-alpha-D-glucosamine biosynthesis; alpha-D-glucosamine 6-phosphate from D-fructose 6-phosphate: step 1/1. Its function is as follows. Involved in amino sugar synthesis (formation of chitin, supplies the amino sugars of asparagine-linked oligosaccharides of glycoproteins). This Schizosaccharomyces pombe (strain 972 / ATCC 24843) (Fission yeast) protein is Probable glutamine--fructose-6-phosphate aminotransferase [isomerizing].